Reading from the N-terminus, the 195-residue chain is Interferon tau (195 aa).

Positions methionine 1–glycine 23 are cleaved as a signal peptide. 2 disulfides stabilise this stretch: cysteine 52–cysteine 162 and cysteine 87–cysteine 109.

The protein belongs to the alpha/beta interferon family. IFN-alphaII subfamily.

It is found in the secreted. Its function is as follows. Paracrine hormone primarily responsible for maternal recognition of pregnancy. Interacts with endometrial receptors, probably type I interferon receptors, and blocks estrogen receptor expression, preventing the estrogen-induced increase in oxytocin receptor expression in the endometrium. This results in the suppression of the pulsatile endometrial release of the luteolytic hormone prostaglandin F2-alpha, hindering the regression of the corpus luteum (luteolysis) and therefore a return to ovarian cyclicity. This, and a possible direct effect of IFN-tau on prostaglandin synthesis, leads in turn to continued ovarian progesterone secretion, which stimulates the secretion by the endometrium of the nutrients required for the growth of the conceptus. In summary, displays particularly high antiviral and antiproliferative potency concurrently with particular weak cytotoxicity, high antiluteolytic activity and immunomodulatory properties. In contrast with other IFNs, IFN-tau is not virally inducible. The sequence is that of Interferon tau (IFNT) from Giraffa camelopardalis (Giraffe).